A 159-amino-acid polypeptide reads, in one-letter code: Single-stranded DNA-binding protein 2 (159 aa).

The region spanning 2–104 is the SSB domain; the sequence is MNRVVLVGRL…VVAESVQFLE (103 aa). Residues 106 to 159 are disordered; sequence RNHAEGATSNNYQNEANYSNNNKTSSYRADTSQKSDSFANEGKPIDINPDDLPF. Residues 114–127 are compositionally biased toward low complexity; it reads SNNYQNEANYSNNN. Residues 128–143 are compositionally biased toward polar residues; it reads KTSSYRADTSQKSDSF.

Homotetramer.

This chain is Single-stranded DNA-binding protein 2 (ssb2), found in Listeria innocua serovar 6a (strain ATCC BAA-680 / CLIP 11262).